Here is a 227-residue protein sequence, read N- to C-terminus: Venom allergen 5.01 (227 aa).

A signal peptide spans 1–23; that stretch reads MEIGGLVYLILIITIINLSFGET. Cystine bridges form between Cys-27-Cys-39, Cys-31-Cys-124, Cys-49-Cys-117, and Cys-193-Cys-210. The region spanning 68 to 212 is the SCP domain; it reads LKRHNDFRQN…WYTHYLVCNY (145 aa).

Belongs to the CRISP family. Venom allergen 5-like subfamily. In terms of tissue distribution, expressed by the venom gland.

Its subcellular location is the secreted. This is Venom allergen 5.01 from Dolichovespula maculata (Bald-faced hornet).